A 160-amino-acid chain; its full sequence is Protein-export protein SecB (160 aa).

This sequence belongs to the SecB family. In terms of assembly, homotetramer, a dimer of dimers. One homotetramer interacts with 1 SecA dimer.

The protein localises to the cytoplasm. Functionally, one of the proteins required for the normal export of preproteins out of the cell cytoplasm. It is a molecular chaperone that binds to a subset of precursor proteins, maintaining them in a translocation-competent state. It also specifically binds to its receptor SecA. This Azorhizobium caulinodans (strain ATCC 43989 / DSM 5975 / JCM 20966 / LMG 6465 / NBRC 14845 / NCIMB 13405 / ORS 571) protein is Protein-export protein SecB.